A 249-amino-acid chain; its full sequence is 2,3-bisphosphoglycerate-dependent phosphoglycerate mutase (249 aa).

Substrate is bound by residues 10-17 (RHGESEWN), 23-24 (TG), Arg-62, 89-92 (ERHY), Lys-100, 116-117 (RR), and 185-186 (GN). His-11 acts as the Tele-phosphohistidine intermediate in catalysis. Glu-89 (proton donor/acceptor) is an active-site residue.

Belongs to the phosphoglycerate mutase family. BPG-dependent PGAM subfamily. In terms of assembly, homodimer.

The enzyme catalyses (2R)-2-phosphoglycerate = (2R)-3-phosphoglycerate. The protein operates within carbohydrate degradation; glycolysis; pyruvate from D-glyceraldehyde 3-phosphate: step 3/5. Its function is as follows. Catalyzes the interconversion of 2-phosphoglycerate and 3-phosphoglycerate. This Hamiltonella defensa subsp. Acyrthosiphon pisum (strain 5AT) protein is 2,3-bisphosphoglycerate-dependent phosphoglycerate mutase.